The primary structure comprises 224 residues: Processed variable antigen (224 aa).

17 consecutive repeat copies span residues 1–6, 7–12, 13–18, 19–24, 25–30, 31–36, 37–42, 43–48, 49–54, 55–60, 61–66, 67–72, 73–78, 79–84, 85–90, 91–96, and 97–102. The interval 1 to 102 is 17 X 6 AA tandem repeats of E-T-G-E-S-K; that stretch reads ETGESKETGE…GESKETGESK (102 aa). Basic and acidic residues predominate over residues 1–137; sequence ETGESKETGE…TEESKDREGN (137 aa). Residues 1–224 are disordered; sequence ETGESKETGE…KKADNKKKKK (224 aa). The span at 144-153 shows a compositional bias: low complexity; the sequence is ENSENSNVTS. Basic and acidic residues-rich tracts occupy residues 156 to 173 and 185 to 217; these read EETK…EKLG and EDPK…EKKA.

The chain is Processed variable antigen from Plasmodium falciparum.